Here is a 201-residue protein sequence, read N- to C-terminus: Translation machinery-associated protein 22 (201 aa).

Residues 94–165 (VTIKRIERNK…EARAYIEKLL (72 aa)) enclose the SUI1 domain.

Belongs to the DENR family. As to quaternary structure, interacts with the 40S ribosomal subunit.

It is found in the cytoplasm. This is Translation machinery-associated protein 22 (TMA22) from Meyerozyma guilliermondii (strain ATCC 6260 / CBS 566 / DSM 6381 / JCM 1539 / NBRC 10279 / NRRL Y-324) (Yeast).